The sequence spans 172 residues: MGVFSPSTTRLTLKWFSLSVALFLLFHWGIPSVDGHEDNMYGEEIQQQRRSCDPQRDPQRLSSCRDYLERRREQPSERCCEELQRMSPQCRCQAIQQMLDQSLSYDSFMDSDSQEDAPLNQRRRRREGRGREEEEAMERAAYLPNTCNVREPPRRCDIQRHSRYSMTGSSFK.

An N-terminal signal peptide occupies residues 1 to 35; the sequence is MGVFSPSTTRLTLKWFSLSVALFLLFHWGIPSVDG. A disordered region spans residues 108 to 172; that stretch reads FMDSDSQEDA…RYSMTGSSFK (65 aa). Over residues 151-160 the composition is skewed to basic and acidic residues; it reads EPPRRCDIQR.

It belongs to the 2S seed storage albumins family.

In Picea glauca (White spruce), this protein is 2S seed storage-like protein.